Reading from the N-terminus, the 296-residue chain is MGFVKVVKNKAYFKRYQVKFRRRREGKTDYYARKRLVIQDKNKYNTPKYRMIVRVTNRDIICQIAYARIEGDMIVCAAYAHELPKYGIKVGLTNYAAAYCTGLLLARRLLNKFGLDKVYEGQVEVTGDEYNVESIDGEPGAFTCYLDAGLTRTTTGNKVFGALKGAVDGGLSIPHSTKRFPGYDSESKEFNPEVHRKHIFAQNVAEYMRLLMEEDEDAYKKQFSQYIKNGVTADQVEDLYKKAHAGIRENPVHEKKPKKEVKKKRWNRAKLSLEQKKDRVAQKKASFLRAQEKADS.

The segment at proline 251 to serine 296 is disordered. Residues lysine 255–arginine 268 are compositionally biased toward basic residues. The segment covering leucine 271 to alanine 281 has biased composition (basic and acidic residues).

Belongs to the universal ribosomal protein uL18 family. In terms of assembly, component of the large ribosomal subunit (LSU). Part of a LSU subcomplex, the 5S RNP which is composed of the 5S RNA, RPL5 and RPL11.

It localises to the cytoplasm. It is found in the nucleus. The protein resides in the nucleolus. Functionally, component of the ribosome, a large ribonucleoprotein complex responsible for the synthesis of proteins in the cell. The small ribosomal subunit (SSU) binds messenger RNAs (mRNAs) and translates the encoded message by selecting cognate aminoacyl-transfer RNA (tRNA) molecules. The large subunit (LSU) contains the ribosomal catalytic site termed the peptidyl transferase center (PTC), which catalyzes the formation of peptide bonds, thereby polymerizing the amino acids delivered by tRNAs into a polypeptide chain. The nascent polypeptides leave the ribosome through a tunnel in the LSU and interact with protein factors that function in enzymatic processing, targeting, and the membrane insertion of nascent chains at the exit of the ribosomal tunnel. As part of the 5S RNP/5S ribonucleoprotein particle it is an essential component of the LSU, required for its formation and the maturation of rRNAs. It also couples ribosome biogenesis to p53/TP53 activation. As part of the 5S RNP it accumulates in the nucleoplasm and inhibits MDM2, when ribosome biogenesis is perturbed, mediating the stabilization and the activation of TP53. In Xenopus laevis (African clawed frog), this protein is Large ribosomal subunit protein uL18A (rpl5-a).